Reading from the N-terminus, the 2515-residue chain is Nonribosomal peptide synthetase tpzA (2515 aa).

The segment at Glu-246 to Arg-648 is adenylation 1. The Carrier 1 domain occupies Ser-794–Ser-867. Ser-828 carries the O-(pantetheine 4'-phosphoryl)serine modification. A condensation 1 region spans residues Asp-924 to Glu-1332. The adenylation 2 stretch occupies residues Arg-1357–Arg-1758. The Carrier 2 domain occupies Leu-1900 to Lys-1976. Ser-1937 carries the post-translational modification O-(pantetheine 4'-phosphoryl)serine. The segment at Val-2013–Lys-2431 is condensation 2. One can recognise a Carrier 3 domain in the interval Pro-2436–Ser-2512. Ser-2473 carries the O-(pantetheine 4'-phosphoryl)serine modification.

This sequence belongs to the NRP synthetase family.

The protein operates within secondary metabolite biosynthesis. In terms of biological role, nonribosomal peptide synthetase; part of the gene cluster that mediates the biosynthesis of terreazepine,. The first step of terreazepine biosynthesis is catalyzed by the indoleamine 2,3-dioxygenase tpzB which produces N-formyl-kynurenine through the catabolism of tryptophan. The two-module NRPS tpzA then utilizes anthranilate and kynurenine to assemble terreazepine. The first adenylation domain of tpzA (A1) loads anthranilate onto the T1 domain, while A2 loads kynurenine, generated through spontaneous nonenzymatic deformylation of the tzpB-supplied N-formyl-kynurenine. TpzA produces a 2:1 mixture of S-R enantiomers, which suggests that the A2 domain accepts both D- and L-kynurenine. The peptide bond formation between the tethered amino acids is catalyzed by the first condensation domain (C1) between anthranilate's carbonyl carbon and kynurenine's aliphatic primary amine. The second C domain (C2) catalyzes the final cyclization event between the aromatic amine of kynurenine and the tethered carbonyl carbon, yielding the final terreazepine product. The T3 domain may facilitate the interaction with downstream tailoring enzymes. In Aspergillus terreus (strain NIH 2624 / FGSC A1156), this protein is Nonribosomal peptide synthetase tpzA.